Consider the following 447-residue polypeptide: N-succinylarginine dihydrolase (447 aa).

Substrate contacts are provided by residues 19 to 28 (AGLSFGNEAS), Asn110, and 137 to 138 (HR). The active site involves Glu174. Arg212 is a binding site for substrate. His248 is an active-site residue. Asp250 and Asn359 together coordinate substrate. The active-site Nucleophile is the Cys365.

It belongs to the succinylarginine dihydrolase family. As to quaternary structure, homodimer.

The catalysed reaction is N(2)-succinyl-L-arginine + 2 H2O + 2 H(+) = N(2)-succinyl-L-ornithine + 2 NH4(+) + CO2. It participates in amino-acid degradation; L-arginine degradation via AST pathway; L-glutamate and succinate from L-arginine: step 2/5. Catalyzes the hydrolysis of N(2)-succinylarginine into N(2)-succinylornithine, ammonia and CO(2). This Escherichia coli O8 (strain IAI1) protein is N-succinylarginine dihydrolase.